The chain runs to 170 residues: Urease accessory protein UreE (170 aa).

The protein belongs to the UreE family.

It localises to the cytoplasm. In terms of biological role, involved in urease metallocenter assembly. Binds nickel. Probably functions as a nickel donor during metallocenter assembly. The chain is Urease accessory protein UreE from Helicobacter pylori (strain G27).